Reading from the N-terminus, the 429-residue chain is Adenylosuccinate synthetase (429 aa).

GTP is bound by residues 12 to 18 and 40 to 42; these read GDEGKGK and GHT. The active-site Proton acceptor is D13. 2 residues coordinate Mg(2+): D13 and G40. IMP contacts are provided by residues 13–16, 38–41, T128, R142, Q223, T238, and R302; these read DEGK and NAGH. The active-site Proton donor is H41. 298–304 provides a ligand contact to substrate; the sequence is VNTGRPR. Residues R304, 330-332, and 412-414 contribute to the GTP site; these read KLD and GVG.

It belongs to the adenylosuccinate synthetase family. As to quaternary structure, homodimer. Mg(2+) serves as cofactor.

The protein resides in the cytoplasm. The catalysed reaction is IMP + L-aspartate + GTP = N(6)-(1,2-dicarboxyethyl)-AMP + GDP + phosphate + 2 H(+). It participates in purine metabolism; AMP biosynthesis via de novo pathway; AMP from IMP: step 1/2. In terms of biological role, plays an important role in the de novo pathway of purine nucleotide biosynthesis. Catalyzes the first committed step in the biosynthesis of AMP from IMP. The chain is Adenylosuccinate synthetase from Paenarthrobacter aurescens (strain TC1).